We begin with the raw amino-acid sequence, 266 residues long: Putative pyruvate, phosphate dikinase regulatory protein (266 aa).

An ADP-binding site is contributed by 149-156 (GVSRTSKT).

The protein belongs to the pyruvate, phosphate/water dikinase regulatory protein family. PDRP subfamily.

The enzyme catalyses N(tele)-phospho-L-histidyl/L-threonyl-[pyruvate, phosphate dikinase] + ADP = N(tele)-phospho-L-histidyl/O-phospho-L-threonyl-[pyruvate, phosphate dikinase] + AMP + H(+). The catalysed reaction is N(tele)-phospho-L-histidyl/O-phospho-L-threonyl-[pyruvate, phosphate dikinase] + phosphate + H(+) = N(tele)-phospho-L-histidyl/L-threonyl-[pyruvate, phosphate dikinase] + diphosphate. In terms of biological role, bifunctional serine/threonine kinase and phosphorylase involved in the regulation of the pyruvate, phosphate dikinase (PPDK) by catalyzing its phosphorylation/dephosphorylation. The protein is Putative pyruvate, phosphate dikinase regulatory protein of Geobacillus kaustophilus (strain HTA426).